The following is a 348-amino-acid chain: D-alanine--D-alanine ligase (348 aa).

An ATP-grasp domain is found at Lys132–Ser334. Residue Leu162–Glu217 participates in ATP binding. 3 residues coordinate Mg(2+): Asp288, Glu301, and Asn303.

Belongs to the D-alanine--D-alanine ligase family. Mg(2+) is required as a cofactor. Mn(2+) serves as cofactor.

Its subcellular location is the cytoplasm. The catalysed reaction is 2 D-alanine + ATP = D-alanyl-D-alanine + ADP + phosphate + H(+). Its pathway is cell wall biogenesis; peptidoglycan biosynthesis. Its function is as follows. Cell wall formation. The chain is D-alanine--D-alanine ligase from Streptococcus uberis (strain ATCC BAA-854 / 0140J).